We begin with the raw amino-acid sequence, 235 residues long: Uridylate kinase (235 aa).

Residue 9–12 (KLSG) participates in ATP binding. Positions 17 to 22 (GKDGYG) are involved in allosteric activation by GTP. Gly51 contacts UMP. The ATP site is built by Gly52 and Arg56. Residues Asp71 and 132-139 (TGNPYFTT) contribute to the UMP site. ATP contacts are provided by Thr159, Tyr165, and Asp168.

It belongs to the UMP kinase family. In terms of assembly, homohexamer.

Its subcellular location is the cytoplasm. It carries out the reaction UMP + ATP = UDP + ADP. Its pathway is pyrimidine metabolism; CTP biosynthesis via de novo pathway; UDP from UMP (UMPK route): step 1/1. Allosterically activated by GTP. Inhibited by UTP. Functionally, catalyzes the reversible phosphorylation of UMP to UDP. The polypeptide is Uridylate kinase (Chlorobium luteolum (strain DSM 273 / BCRC 81028 / 2530) (Pelodictyon luteolum)).